The following is a 60-amino-acid chain: Protein translocase subunit SecE (60 aa).

Residues 31 to 51 (IIVVSTVIFFLVFFYALDIGI) traverse the membrane as a helical segment.

It belongs to the SecE/SEC61-gamma family. In terms of assembly, component of the Sec protein translocase complex. Heterotrimer consisting of SecY, SecE and SecG subunits. The heterotrimers can form oligomers, although 1 heterotrimer is thought to be able to translocate proteins. Interacts with the ribosome. Interacts with SecDF, and other proteins may be involved. Interacts with SecA.

The protein localises to the cell membrane. Functionally, essential subunit of the Sec protein translocation channel SecYEG. Clamps together the 2 halves of SecY. May contact the channel plug during translocation. The protein is Protein translocase subunit SecE of Staphylococcus epidermidis (strain ATCC 35984 / DSM 28319 / BCRC 17069 / CCUG 31568 / BM 3577 / RP62A).